Consider the following 1070-residue polypeptide: MSNARRRFSTVTQINTEGLQAMGKGGGRMETVGEDGIPADYKGNRKFTTSLGHLALYKEDEGIGTQASFISGYTTPGPKERATSEHVKANLGVMLGVYLPTIQHILGVTMFIRLFWVVGMSGVAWTMALLAICCLSTLLTSISLSAVATNGVVESGGAYFIISRNLGAEFGSAVGILFYLANTVAASMYIVGGVEVILMYLWPEMAIGGADALHDTEMFGSLYNNLRLYGTVFLLIQALIVAMGVKFVQLLAPVSLMCVILAIAACIGGGIEKQITMEGMKVCAIDNHLLQSSIVTHPIHKNQTSWFNETVDFCNLCDKSLYLESVFCANVNNDEASAEDDVFCTHYTSKKMTCQLAFPGFNMKTLNDNMWPEYMEKSEVVPGVRGKETAEVVQDESSTFFMLMAIYFPAVTGIFTGTNMSGDLRDPQRSIPVGTIAATLTTSAIYYILAILFGGSITRSVLRDKFGRSIGNTMVVAALSWPHPAVVTVGAFLSTFGAALQCLCSAPRLLQSIAKDDVIPILAPFARVTKNNEPFLGLVLTVIIAECGILLGAVDKIAEVLDFFFLMCYAFVNLIAVLHSVLKSPNWRPRFKYFHWTLSLLGAALCFFIMFASSVPLACIACTATAVIYKYVEWKGAKKEWGDGMRGLALTTAQYSLLKVEDKDPHPKNWRPQVLILLTSQWSKEMIDRRAVSMLNLGAQLKAGRGLAIACAFLKGSVDSQKDKNRARDVKTTLVKDMSSVRLRGFAKTMFYNNHQINGTISGLYQSIGIGGLRPNTILLNWPNEKNPDELVLFAEEIIHGAANDNCLIVTKGITDFPEYSERLTGFIDIWWIVQDGGILMLIAYLLRQHKVWKGCTLRIFAVSEQDSTKSEDMKAGLQKYIYMLRIDAELFIVDLLDMEVSDEVVEKAAEVERKQKEREEMRRSKSGYLNDGFMEDNGKPRQVMMRHSDSARSFSPQPGAHTSINLDETETSFTESLFDDFYRSGTPNEDLEGAMKLNIHKMNTSVRLNRVIRENSPDSQLILLNLPSPPRNRLAFNNSYMTYLDVLTEDLPRVLFIGGSGREVITIDS.

15 helical membrane passes run 92–112, 114–134, 142–162, 174–194, 196–216, 228–248, 251–271, 400–420, 433–453, 473–493, 534–554, 557–577, 600–620, 791–811, and 827–847; these read GVML…TMFI, LFWV…AICC, ISLS…YFII, VGIL…VGGV, VILM…LHDT, LYGT…VKFV, LAPV…GGGI, FFML…GTNM, VGTI…AILF, TMVV…GAFL, PFLG…LGAV, IAEV…LIAV, LLGA…LACI, LVLF…LIVT, and FIDI…AYLL.

As to expression, expressed in the amphid sheath glia and the cephalic sheath glia. Also expressed in the inner labial and outer labial sheath and socket glia and as well as phasmid sheath glia.

It localises to the cell membrane. Probable potassium/chloride cotransporter that functions in the amphid sheath glial cells to regulate thermotaxis behavior. By maintaining chloride homeostasis, negatively regulates guanylate cyclase gcy-8 in the thermosensory AFD neurons and thereby controls the microvilli receptive ending morphology of the AFD neurons and thermotaxis. Modulates the temperature-evoked neuronal activity of the AFD neurons such as calcium responses to temperature gradients. Might also play a role in the chemotaxis behavior mediated by the sensory neurons AWA and AWC. The sequence is that of Potassium/chloride cotransporter 3 (kcc-3) from Caenorhabditis elegans.